A 145-amino-acid chain; its full sequence is MNPAHLLILSAVCVSLLGAANVPPQHLNLYQFKNMIVCAGTRPWIGYVNYGCYCGAGGSGTPVDELDRCCYVHDNCYGEAEKIPGCNPKTKTYSYTCTKPNLTCTDAAGTCARIVCDCDRTAAICFAAAPYNINNFMISSSTHCQ.

An N-terminal signal peptide occupies residues 1 to 19 (MNPAHLLILSAVCVSLLGA). Positions 20 to 27 (ANVPPQHL) are excised as a propeptide. 7 disulfides stabilise this stretch: Cys-38/Cys-97, Cys-52/Cys-144, Cys-54/Cys-70, Cys-69/Cys-125, Cys-76/Cys-118, Cys-86/Cys-111, and Cys-104/Cys-116. Residues Tyr-53, Gly-55, and Gly-57 each contribute to the Ca(2+) site. His-73 is an active-site residue. Asp-74 lines the Ca(2+) pocket. Residue Asp-119 is part of the active site.

Belongs to the phospholipase A2 family. Group I subfamily. D49 sub-subfamily. Ca(2+) serves as cofactor. Expressed by the venom gland.

The protein localises to the secreted. It carries out the reaction a 1,2-diacyl-sn-glycero-3-phosphocholine + H2O = a 1-acyl-sn-glycero-3-phosphocholine + a fatty acid + H(+). In terms of biological role, PLA2 catalyzes the calcium-dependent hydrolysis of the 2-acyl groups in 3-sn-phosphoglycerides. This Bungarus multicinctus (Many-banded krait) protein is Acidic phospholipase A2.